We begin with the raw amino-acid sequence, 283 residues long: 2-dehydro-3-deoxyphosphooctonate aldolase (283 aa).

It belongs to the KdsA family.

Its subcellular location is the cytoplasm. The enzyme catalyses D-arabinose 5-phosphate + phosphoenolpyruvate + H2O = 3-deoxy-alpha-D-manno-2-octulosonate-8-phosphate + phosphate. Its pathway is carbohydrate biosynthesis; 3-deoxy-D-manno-octulosonate biosynthesis; 3-deoxy-D-manno-octulosonate from D-ribulose 5-phosphate: step 2/3. It functions in the pathway bacterial outer membrane biogenesis; lipopolysaccharide biosynthesis. The chain is 2-dehydro-3-deoxyphosphooctonate aldolase from Synechococcus sp. (strain WH7803).